The primary structure comprises 783 residues: Polyadenylate-binding protein, cytoplasmic and nuclear (783 aa).

The segment at 16–65 (DLGNTSLGGGDNRAAPAINTNVAPGEYQTADPDTAGPTPSSAAPHPQSSA) is disordered. Over residues 54–65 (PSSAAPHPQSSA) the composition is skewed to low complexity. 4 RRM domains span residues 65 to 143 (ASLY…WSQR), 153 to 230 (GNVF…YHIP), 246 to 323 (TNIY…RAQK), and 349 to 471 (VNLY…LAQR). 3 disordered regions span residues 381–428 (MRDA…KGDR), 596–671 (AAAL…AAGG), and 752–783 (VKSQ…EEKA). The segment covering 396–406 (GKDKENKKEGE) has biased composition (basic and acidic residues). The span at 407–416 (QAAEAEGEAE) shows a compositional bias: acidic residues. The span at 417-428 (GAEKKTEKKGDR) shows a compositional bias: basic and acidic residues. Positions 601 to 614 (NGRGGPGGPGGRGM) are enriched in gly residues. Residues 630–641 (AGFPPNGRPQNG) are compositionally biased toward low complexity. Residues 642–655 (NMGGRGGPGRGGNF) show a composition bias toward gly residues. Over residues 656–671 (AAGRGAPPAGPLAAGG) the composition is skewed to low complexity. Residues 676–753 (SSLLQSQLTA…AMAVYDEYVK (78 aa)) form the PABC domain. A compositionally biased stretch (basic and acidic residues) spans 770–783 (EAEKPKEEKAEEKA).

Belongs to the polyadenylate-binding protein type-1 family.

Its subcellular location is the cytoplasm. It localises to the nucleus. Its function is as follows. Binds the poly(A) tail of mRNA. Appears to be an important mediator of the multiple roles of the poly(A) tail in mRNA biogenesis, stability and translation. In the nucleus, involved in both mRNA cleavage and polyadenylation. Is also required for efficient mRNA export to the cytoplasm. Acts in concert with a poly(A)-specific nuclease (PAN) to affect poly(A) tail shortening, which may occur concomitantly with either nucleocytoplasmic mRNA transport or translational initiation. In the cytoplasm, stimulates translation initiation and regulates mRNA decay through translation termination-coupled poly(A) shortening, probably mediated by PAN. The chain is Polyadenylate-binding protein, cytoplasmic and nuclear (PAB1) from Chaetomium globosum (strain ATCC 6205 / CBS 148.51 / DSM 1962 / NBRC 6347 / NRRL 1970) (Soil fungus).